The sequence spans 246 residues: Probable transcriptional regulatory protein RB5500 (246 aa).

The protein belongs to the TACO1 family.

It is found in the cytoplasm. The sequence is that of Probable transcriptional regulatory protein RB5500 from Rhodopirellula baltica (strain DSM 10527 / NCIMB 13988 / SH1).